The chain runs to 251 residues: Putative glutathione-independent glyoxalase hsp3105 (251 aa).

The protein belongs to the peptidase C56 family. HSP31-like subfamily.

It is found in the cytoplasm. The protein localises to the nucleus. It catalyses the reaction methylglyoxal + H2O = (R)-lactate + H(+). May catalyze the conversion of methylglyoxal (MG) to D-lactate in a single glutathione (GSH)-independent step. May play a role in detoxifying endogenously produced glyoxals. Involved in protection against reactive oxygen species (ROS). In Schizosaccharomyces pombe (strain 972 / ATCC 24843) (Fission yeast), this protein is Putative glutathione-independent glyoxalase hsp3105.